The sequence spans 816 residues: Phosphatidylinositol 4-kinase beta (816 aa).

3 disordered regions span residues 1–29 (MGDM…GGSL), 99–121 (EEED…RRRQ), and 250–318 (RKRE…SFSS). An N-acetylglycine modification is found at glycine 2. The tract at residues 2-68 (GDMVVEPATL…VKLLHGGVAI (67 aa)) is interaction with ACBD3. Over residues 10-29 (TLKPTSEPTPSPSGNNGGSL) the composition is skewed to low complexity. One can recognise a PIK helical domain in the interval 61–242 (LLHGGVAISS…GTKLRKLILS (182 aa)). Phosphoserine is present on serine 258. Threonine 263 is subject to Phosphothreonine. 5 positions are modified to phosphoserine: serine 266, serine 275, serine 277, serine 284, and serine 294. 2 stretches are compositionally biased toward polar residues: residues 278–297 (DATA…SNPK) and 306–318 (SSST…SFSS). Serine 428 carries the phosphoserine modification. Threonine 438 bears the Phosphothreonine mark. Serine 511 carries the post-translational modification Phosphoserine. A phosphothreonine mark is found at threonine 517 and threonine 519. The PI3K/PI4K catalytic domain maps to 535 to 801 (EPWQEKVRRI…MVDGSMRSIT (267 aa)). The segment at 541 to 547 (VRRIREG) is G-loop. The tract at residues 668-676 (QVKDRHNGN) is catalytic loop. The interval 687-711 (HIDFGFILSSSPRNLGFETSAFKLT) is activation loop.

Belongs to the PI3/PI4-kinase family. Type III PI4K subfamily. As to quaternary structure, interacts with ARF1 and ARF3 in the Golgi complex, but not with ARF4, ARF5 or ARF6. Interacts with NCS1/FREQ in a calcium-independent manner. Interacts with CALN1/CABP8 and CALN2/CABP7; in a calcium-dependent manner; this interaction competes with NCS1/FREQ binding. Interacts with ACBD3. Interacts with ARMH3, YWHAB, YWHAE, YWHAG, YWHAH, YWHAQ, YWHAZ and SFN. Interacts with GGA2 (via VHS domain); the interaction is important for PI4KB location at the Golgi apparatus membrane. Interacts with ATG9A. Mg(2+) is required as a cofactor. Mn(2+) serves as cofactor. As to expression, strongly expressed in brain, kidney, lung, small intestine, uterus and adrenal gland. Weaker expression in liver, heart, skeletal muscle, thymus and testis. Not detected in spleen.

The protein localises to the golgi apparatus. It localises to the endomembrane system. Its subcellular location is the mitochondrion outer membrane. The protein resides in the rough endoplasmic reticulum membrane. It is found in the golgi apparatus membrane. The catalysed reaction is a 1,2-diacyl-sn-glycero-3-phospho-(1D-myo-inositol) + ATP = a 1,2-diacyl-sn-glycero-3-phospho-(1D-myo-inositol 4-phosphate) + ADP + H(+). Its activity is regulated as follows. Inhibited by wortmannin. Increased kinase activity upon interaction with NCS1/FREQ. Functionally, phosphorylates phosphatidylinositol (PI) in the first committed step in the production of the second messenger inositol-1,4,5,-trisphosphate (PIP). May regulate Golgi disintegration/reorganization during mitosis, possibly via its phosphorylation. Involved in Golgi-to-plasma membrane trafficking. May play an important role in the inner ear development. The chain is Phosphatidylinositol 4-kinase beta (Pi4kb) from Rattus norvegicus (Rat).